The following is a 194-amino-acid chain: Large ribosomal subunit protein bL25B (194 aa).

The protein belongs to the bacterial ribosomal protein bL25 family. CTC subfamily. As to quaternary structure, part of the 50S ribosomal subunit; part of the 5S rRNA/L5/L18/L25 subcomplex. Contacts the 5S rRNA. Binds to the 5S rRNA independently of L5 and L18.

Functionally, this is one of the proteins that binds to the 5S RNA in the ribosome where it forms part of the central protuberance. This chain is Large ribosomal subunit protein bL25B, found in Symbiobacterium thermophilum (strain DSM 24528 / JCM 14929 / IAM 14863 / T).